The chain runs to 243 residues: UPF0702 transmembrane protein YkjA (243 aa).

3 helical membrane passes run 3–23, 34–54, and 58–78; these read WMVW…YILF, MNNF…EPIL, and LPMS…MSKL.

Belongs to the UPF0702 family.

The protein resides in the cell membrane. The sequence is that of UPF0702 transmembrane protein YkjA (ykjA) from Bacillus subtilis (strain 168).